The sequence spans 106 residues: Class II hydrophobin 6 (106 aa).

An N-terminal signal peptide occupies residues Met1–Ala16. 4 disulfides stabilise this stretch: Cys36–Cys86, Cys47–Cys77, Cys48–Cys60, and Cys87–Cys98.

It belongs to the cerato-ulmin hydrophobin family. In terms of assembly, homodimer. Homodimers further self-assemble to form highly ordered films at water-air interfaces through intermolecular interactions.

Its subcellular location is the secreted. It localises to the cell wall. Functionally, aerial growth, conidiation, and dispersal of filamentous fungi in the environment rely upon a capability of their secreting small amphipathic proteins called hydrophobins (HPBs) with low sequence identity. Class I can self-assemble into an outermost layer of rodlet bundles on aerial cell surfaces, conferring cellular hydrophobicity that supports fungal growth, development and dispersal; whereas Class II form highly ordered films at water-air interfaces through intermolecular interactions but contribute nothing to the rodlet structure. HFB2-6 is a class II hydrophobin that has a function in root colonization. Acts as an effector in poplar by up-regulating the expression of genes related to both the jasmonic acid and salicylic acid signal transduction pathways, which not only causes induced systemic resistance (ISR), but also systemic acquired resistance (SAR), giving poplar broad-spectrum resistance to pathogens. Also induces genes related to auxin signal transduction to promote poplar growth. Plays roles in interactions with both biotic and abiotic environmental conditions such as the presence of the pathogen Alternaria alternata or nutrient starvation conditions. This is Class II hydrophobin 6 from Trichoderma asperellum (strain ATCC 204424 / CBS 433.97 / NBRC 101777).